We begin with the raw amino-acid sequence, 316 residues long: Inactive peptidyl-prolyl cis-trans isomerase FKBP6 (316 aa).

Residues 43 to 132 form the PPIase FKBP-type domain; it reads DASVLVKYSG…LFEIELLDFL (90 aa). TPR repeat units lie at residues 160 to 193, 208 to 241, and 242 to 275; these read AATE…LHRR, LLVL…DQKN, and AKAL…QPFN.

It belongs to the FKBP6 family. In terms of assembly, interacts with HSP72/HSPA2 and CLTC. Interacts with GAPDH; leading to inhibit GAPDH catalytic activity. Interacts (via TPR repeats) with HSP90. Specifically expressed in testis and sperm.

The protein resides in the cytoplasm. It is found in the cytosol. It localises to the nucleus. Functionally, co-chaperone required during spermatogenesis to repress transposable elements and prevent their mobilization, which is essential for the germline integrity. Acts via the piRNA metabolic process, which mediates the repression of transposable elements during meiosis by forming complexes composed of piRNAs and Piwi proteins and govern the methylation and subsequent repression of transposons. Acts as a co-chaperone via its interaction with HSP90 and is required for the piRNA amplification process, the secondary piRNA biogenesis. May be required together with HSP90 in removal of 16 nucleotide ping-pong by-products from Piwi complexes, possibly facilitating turnover of Piwi complexes. In Equus caballus (Horse), this protein is Inactive peptidyl-prolyl cis-trans isomerase FKBP6 (FKBP6).